Consider the following 157-residue polypeptide: MSAPFEERSGVVPCGTPWGQWYQTLEEVFIEVQVPPGTRAQDIQCGLQSRHVALAVGGREILKGKLFDSTIADEGTWTLEDRKMVRIVLTKTKRDAANCWTSLLESEYAADPWVQDQMQRKLTLERFQKENPGFDFSGAEISGNYTKGGPDFSNLEK.

The residue at position 2 (serine 2) is an N-acetylserine. Residues 14-104 enclose the CS domain; it reads CGTPWGQWYQ…DAANCWTSLL (91 aa). Positions 134–157 are disordered; it reads FDFSGAEISGNYTKGGPDFSNLEK. Residue serine 142 is modified to Phosphoserine. Phosphotyrosine is present on tyrosine 145.

Interacts with LIS1.

It localises to the chromosome. The protein resides in the centromere. It is found in the kinetochore. The protein localises to the cytoplasm. Its subcellular location is the cytoskeleton. It localises to the microtubule organizing center. The protein resides in the centrosome. It is found in the spindle pole. Its function is as follows. May regulate the LIS1/dynein pathway by stabilizing LIS1 with Hsp90 chaperone. In Mus musculus (Mouse), this protein is NudC domain-containing protein 2 (Nudcd2).